The chain runs to 209 residues: Streptogramin A acetyltransferase (209 aa).

Residue H82 is part of the active site.

Belongs to the transferase hexapeptide repeat family. In terms of assembly, homohexamer.

Functionally, inactivates the A compounds of streptogramin antibiotics by acetylation, thus providing resistance to these antibiotics. The polypeptide is Streptogramin A acetyltransferase (vatD) (Enterococcus faecium (Streptococcus faecium)).